A 750-amino-acid chain; its full sequence is Tyrosine-protein phosphatase 2 (750 aa).

A disordered region spans residues Met-1–Met-20. Position 258 is a phosphoserine (Ser-258). Disordered regions lie at residues Leu-327–Tyr-348 and Val-425–Tyr-450. Polar residues predominate over residues Lys-330 to Tyr-348. Residues Ser-383–Tyr-737 form the Tyrosine-protein phosphatase domain. Ser-430 is subject to Phosphoserine. Residue Cys-666 is the Phosphocysteine intermediate of the active site.

Belongs to the protein-tyrosine phosphatase family. Non-receptor class subfamily. In terms of assembly, interacts with HOG1.

The protein localises to the cytoplasm. It localises to the nucleus. The catalysed reaction is O-phospho-L-tyrosyl-[protein] + H2O = L-tyrosyl-[protein] + phosphate. In terms of biological role, major phosphatase responsible with PTP3 for tyrosine dephosphorylation of MAP kinase HOG1 to inactivate its activity. May also be involved in the regulation of MAP kinase FUS3. May be implicated in the ubiquitin-mediated protein degradation. The polypeptide is Tyrosine-protein phosphatase 2 (PTP2) (Saccharomyces cerevisiae (strain ATCC 204508 / S288c) (Baker's yeast)).